The sequence spans 331 residues: Pyrimidine monooxygenase RutA (331 aa).

FMN is bound by residues 79–80, Asn-145, Glu-154, 170–171, and Ser-220; these read IK and RY. The segment at 300 to 331 is disordered; sequence WLTEQSQKDTRSGTDTNVRQMADPTSASAFNH. The span at 312–331 shows a compositional bias: polar residues; that stretch reads GTDTNVRQMADPTSASAFNH.

Belongs to the NtaA/SnaA/DszA monooxygenase family. RutA subfamily.

The enzyme catalyses uracil + FMNH2 + NADH + O2 = (Z)-3-ureidoacrylate + FMN + NAD(+) + H2O + H(+). It carries out the reaction thymine + FMNH2 + NADH + O2 = (Z)-2-methylureidoacrylate + FMN + NAD(+) + H2O + H(+). Functionally, catalyzes the pyrimidine ring opening between N-3 and C-4 by an unusual flavin hydroperoxide-catalyzed mechanism, adding oxygen atoms in the process to yield ureidoacrylate peracid, that immediately reacts with FMN forming ureidoacrylate and FMN-N(5)-oxide. The FMN-N(5)-oxide reacts spontaneously with NADH to produce FMN. Requires the flavin reductase RutF to regenerate FMN in vivo. The sequence is that of Pyrimidine monooxygenase RutA from Escherichia coli O7:K1 (strain IAI39 / ExPEC).